Reading from the N-terminus, the 314-residue chain is Dihydroorotate dehydrogenase (fumarate) (314 aa).

FMN contacts are provided by residues alanine 21 and 45-46 (KS). Substrate-binding positions include lysine 45, 69–73 (NSMGL), and asparagine 129. Asparagine 129 contacts FMN. Cysteine 132 (nucleophile) is an active-site residue. Asparagine 134 is a binding site for substrate. The FMN site is built by lysine 166 and valine 195. Residue 196 to 197 (NS) coordinates substrate. FMN-binding positions include glycine 224, 251-252 (GG), and 273-274 (GT).

This sequence belongs to the dihydroorotate dehydrogenase family. Type 1 subfamily. As to quaternary structure, homodimer. It depends on FMN as a cofactor.

The protein localises to the cytoplasm. The enzyme catalyses (S)-dihydroorotate + fumarate = orotate + succinate. The protein operates within pyrimidine metabolism; UMP biosynthesis via de novo pathway. In terms of biological role, catalyzes the conversion of dihydroorotate to orotate with fumarate as the electron acceptor. Molecular oxygen can replace fumarate in vitro. This chain is Dihydroorotate dehydrogenase (fumarate) (pyr4), found in Trypanosoma cruzi (strain CL Brener).